Reading from the N-terminus, the 328-residue chain is GTPase Obg (328 aa).

An Obg domain is found at 2–160 (YNFKDSVNIT…LSVRLELFLV (159 aa)). The region spanning 161–326 (ADIGLVGLPN…LIKEFFILAK (166 aa)) is the OBG-type G domain. GTP contacts are provided by residues 167 to 174 (GLPNAGKS), 192 to 196 (FTTKI), 213 to 216 (DIPG), 280 to 283 (NKLD), and 307 to 309 (SIY). Residues serine 174 and threonine 194 each contribute to the Mg(2+) site.

Belongs to the TRAFAC class OBG-HflX-like GTPase superfamily. OBG GTPase family. Monomer. The cofactor is Mg(2+).

It is found in the cytoplasm. An essential GTPase which binds GTP, GDP and possibly (p)ppGpp with moderate affinity, with high nucleotide exchange rates and a fairly low GTP hydrolysis rate. Plays a role in control of the cell cycle, stress response, ribosome biogenesis and in those bacteria that undergo differentiation, in morphogenesis control. The sequence is that of GTPase Obg from Borreliella burgdorferi (strain ATCC 35210 / DSM 4680 / CIP 102532 / B31) (Borrelia burgdorferi).